The primary structure comprises 1793 residues: Non-reducing polyketide synthase adaA (1793 aa).

The segment at 16 to 250 is N-terminal acylcarrier protein transacylase domain (SAT); the sequence is NDDLKALFRG…YSKSLALPVY (235 aa). The 434-residue stretch at 388–821 folds into the Ketosynthase family 3 (KS3) domain; the sequence is DSKLAIVGMA…GGNTTLVLED (434 aa). Residues C561, H696, and H739 each act as for beta-ketoacyl synthase activity in the active site. The interval 923 to 1245 is malonyl-CoA:ACP transacylase (MAT) domain; it reads VFTFTGQGAY…KSLCTLHLAG (323 aa). Positions 1312–1634 are product template (PT) domain; it reads TSLIHQVTEE…RLLMDRFFSP (323 aa). An N-terminal hotdog fold region spans residues 1316-1452; that stretch reads HQVTEETVDK…GSIKYPADPT (137 aa). One can recognise a PKS/mFAS DH domain in the interval 1316 to 1629; it reads HQVTEETVDK…FRRVPRLLMD (314 aa). H1348 functions as the Proton acceptor; for dehydratase activity in the catalytic mechanism. The tract at residues 1482–1629 is C-terminal hotdog fold; the sequence is KASTLSKPLA…FRRVPRLLMD (148 aa). Residue D1540 is the Proton donor; for dehydratase activity of the active site. Residues 1642-1659 show a composition bias toward low complexity; that stretch reads AAPAPAPAAVPAVKKQPP. The segment at 1642–1714 is disordered; it reads AAPAPAPAAV…TTEQEAPVAD (73 aa). Residues 1660–1681 show a composition bias toward polar residues; it reads TETIQPQAPKTEQKQDQLQLPN. A compositionally biased stretch (low complexity) spans 1683 to 1706; sequence ASAAPSTANSSSSPSSSGVATPTT. One can recognise a Carrier domain in the interval 1716-1793; the sequence is SAVTGVAGKC…DLTGWLEQYC (78 aa). O-(pantetheine 4'-phosphoryl)serine is present on S1753.

It depends on pantetheine 4'-phosphate as a cofactor.

It carries out the reaction holo-[ACP] + 9 malonyl-CoA + acetyl-CoA + 9 H(+) = 3-(2,4-dioxopentyl)-3,6,8,9-tetrahydroxy-1-oxo-1,2,3,4-tetrahydroanthracene-2-carboxyl-[ACP] + 9 CO2 + 10 CoA + 2 H2O. Its pathway is secondary metabolite biosynthesis. Non-reducing polyketide synthase; part of the gene cluster that mediates the biosynthesis of the linear tetracyclic TAN-1612 neuropeptide Y receptor antagonist. The decaketide backbone of TAN-1612 is synthesized by the non-reducing polyketide synthase adaA via condensation of one acetyl-CoA starter unit with 9 malonyl-CoA units. The FAD-dependent monooxygenase adaC then performs hydroxylation at C2 while the polaketide chain is still attached to the NRPKS adaA. The alpha-hydroxylation step at C2 appears to be crucial for the following C18-C1 Claisen cyclization and release of the C9-hydroxyl version of TAN-1612 from the NRPKS adaA, two steps performed by the lactamase-like protein adaB. Finally, the O-methyltransferase adaD performs the C9 O-methylation to complete the biosynthesis of TAN-1612. The polypeptide is Non-reducing polyketide synthase adaA (Aspergillus niger (strain ATCC MYA-4892 / CBS 513.88 / FGSC A1513)).